A 76-amino-acid polypeptide reads, in one-letter code: Histone H2A (76 aa).

The disordered stretch occupies residues 1–23 (MSGRGKTGGKARAKAKTRSSRAG). Ser2 bears the N-acetylserine; in acipensins mark. Residue Ser2 is modified to N-acetylserine; in histone H2A. Ser2 bears the Phosphoserine; in histone H2A mark. N6-(2-hydroxyisobutyryl)lysine is present on Lys6. N6-acetyllysine; in histone H2A is present on Lys6. A compositionally biased stretch (basic residues) spans 7-19 (TGGKARAKAKTRS). N6-(2-hydroxyisobutyryl)lysine; alternate is present on Lys10. An N6-lactoyllysine; alternate modification is found at Lys10. Lys10 is modified (N6-succinyllysine). Glycyl lysine isopeptide (Lys-Gly) (interchain with G-Cter in ubiquitin); in histone H2A cross-links involve residues Lys14 and Lys16. N6-(2-hydroxyisobutyryl)lysine; alternate is present on Lys37. An N6-(2-hydroxyisobutyryl)lysine mark is found at Lys65 and Lys66.

Belongs to the histone H2A family. As to quaternary structure, the nucleosome is a histone octamer containing two molecules each of H2A, H2B, H3 and H4 assembled in one H3-H4 heterotetramer and two H2A-H2B heterodimers. The octamer wraps approximately 147 bp of DNA. In terms of processing, phosphorylation on Ser-2 is enhanced during mitosis. Phosphorylation on Ser-2 directly represses transcription.

Its subcellular location is the nucleus. The protein resides in the chromosome. Core component of nucleosome. Nucleosomes wrap and compact DNA into chromatin, limiting DNA accessibility to the cellular machineries which require DNA as a template. Histones thereby play a central role in transcription regulation, DNA repair, DNA replication and chromosomal stability. DNA accessibility is regulated via a complex set of post-translational modifications of histones, also called histone code, and nucleosome remodeling. In terms of biological role, acipensins are antimicrobial peptides. Acipensins 1 and 2 have antibacterial activity against Gram-positive bacteria L.monocytogenes EGD (MIC are 1.1 uM and 1.0 uM, respectively) and S.aureus ATCC 33591 (MIC are 0.9 uM and 0.6 uM, respectively), against Gram-negative bacterium E.coli ML-35p (MIC are 0.7 uM and 0.3 uM, respectively) and antifungal activity against C.albicans 820 (MIC are 1.0 uM and 0.9 uM, respectively). Acipensin 6 has antibacterial activity against Gram-negative bacterium E.coli ML-35p (MIC=2.5 uM). Antimicrobial activity is reduced by high ionic strength. Acipensins 1, 2 and 6 have no hemolytic (up to 40 uM) or cytotoxic (up to 20 uM) effects on human cells in vitro. In Acipenser gueldenstaedtii (Russian sturgeon), this protein is Histone H2A.